Consider the following 491-residue polypeptide: MYRKSALELRNSVVSGESSATAIAEYFYNRIETEDSRIGAFLSLCKERAYEKAAIVDAKRERGEPLGKLAGVPIGIKDNIHVTGLRTTCASKMLENYIAPFDATVIKRIEAEDGIILGKLNMDEFAMGSTTQYSAFHPTKNPWDLSCVPGGSSGGSAAAVSARFCPMALGSDTGGSIRQPAAFCGVVGFKPSYGAVSRYGLVAFGSSLDQIGPLTTVVEDVALAMDVFAGKDKNDATTQEFFTGSFQDALSLEVPSLIGVPMGFLEGLRDDIKENFFASLNVLERQGSHIVDIDLDILHHAVSVYYIVASAEAATNLARFDGIRYGYRSLEAHSMEDVYTLSRVQGFGKEVMRRILLGNYVLSAERQSVYYKKGTAIRAKIIQAFQKAYEKCEVIAMPVCSCPAFADGEILDPISLYLQDIYTVAMNLAYLPAIAVPSGFSKEGLPLGLQIIGQQGRDQQVCQVGYSFQEHSGIKNICPEGCNKLFDGEVK.

Active-site charge relay system residues include lysine 77 and serine 152. Catalysis depends on serine 176, which acts as the Acyl-ester intermediate.

The protein belongs to the amidase family. GatA subfamily. Heterotrimer of A, B and C subunits.

The enzyme catalyses L-glutamyl-tRNA(Gln) + L-glutamine + ATP + H2O = L-glutaminyl-tRNA(Gln) + L-glutamate + ADP + phosphate + H(+). Allows the formation of correctly charged Gln-tRNA(Gln) through the transamidation of misacylated Glu-tRNA(Gln) in organisms which lack glutaminyl-tRNA synthetase. The reaction takes place in the presence of glutamine and ATP through an activated gamma-phospho-Glu-tRNA(Gln). The protein is Glutamyl-tRNA(Gln) amidotransferase subunit A of Chlamydia felis (strain Fe/C-56) (Chlamydophila felis).